The following is a 228-amino-acid chain: Cutinase CUT1 (228 aa).

Residues 1–16 form the signal peptide; the sequence is MQFITVALTLIALASA. Cys49 and Cys127 are disulfide-bonded. The active-site Nucleophile is Ser138. A disulfide bond links Cys189 and Cys196. An N-linked (GlcNAc...) asparagine glycan is attached at Asn190. Asp193 is a catalytic residue. The Proton donor/acceptor role is filled by His206.

It belongs to the cutinase family. The 2 disulfide bonds play a critical role in holding the catalytic residues in juxta-position; reduction of the disulfide bridges results in the complete inactivation of the enzyme.

The protein resides in the secreted. The enzyme catalyses cutin + H2O = cutin monomers.. Its function is as follows. Catalyzes the hydrolysis of complex carboxylic polyesters found in the cell wall of plants. Degrades cutin, a macromolecule that forms the structure of the plant cuticle. Required for efficient penetration of the host plant cuticle by the appressorium during the initial stage of fungal infection. The sequence is that of Cutinase CUT1 from Pyricularia oryzae (strain 70-15 / ATCC MYA-4617 / FGSC 8958) (Rice blast fungus).